A 257-amino-acid polypeptide reads, in one-letter code: 3-methyl-2-oxobutanoate hydroxymethyltransferase (257 aa).

2 residues coordinate Mg(2+): Asp42 and Asp81. 3-methyl-2-oxobutanoate-binding positions include 42–43 (DS), Asp81, and Lys110. A Mg(2+)-binding site is contributed by Glu112. The active-site Proton acceptor is the Glu176.

Belongs to the PanB family. In terms of assembly, homodecamer; pentamer of dimers. It depends on Mg(2+) as a cofactor.

The protein localises to the cytoplasm. It carries out the reaction 3-methyl-2-oxobutanoate + (6R)-5,10-methylene-5,6,7,8-tetrahydrofolate + H2O = 2-dehydropantoate + (6S)-5,6,7,8-tetrahydrofolate. Its pathway is cofactor biosynthesis; (R)-pantothenate biosynthesis; (R)-pantoate from 3-methyl-2-oxobutanoate: step 1/2. Its function is as follows. Catalyzes the reversible reaction in which hydroxymethyl group from 5,10-methylenetetrahydrofolate is transferred onto alpha-ketoisovalerate to form ketopantoate. This is 3-methyl-2-oxobutanoate hydroxymethyltransferase from Pelagibacter ubique (strain HTCC1062).